We begin with the raw amino-acid sequence, 172 residues long: Adenine phosphoribosyltransferase (172 aa).

This sequence belongs to the purine/pyrimidine phosphoribosyltransferase family. Homodimer.

It is found in the cytoplasm. The catalysed reaction is AMP + diphosphate = 5-phospho-alpha-D-ribose 1-diphosphate + adenine. The protein operates within purine metabolism; AMP biosynthesis via salvage pathway; AMP from adenine: step 1/1. Its function is as follows. Catalyzes a salvage reaction resulting in the formation of AMP, that is energically less costly than de novo synthesis. The polypeptide is Adenine phosphoribosyltransferase (Streptococcus equi subsp. zooepidemicus (strain H70)).